The primary structure comprises 108 residues: Putative bolA-like protein K11H12.1 (108 aa).

Residues 89 to 108 (SKWDGQKQEDSPTCRGGFGK) are disordered.

It belongs to the BolA/IbaG family.

The protein is Putative bolA-like protein K11H12.1 of Caenorhabditis elegans.